A 257-amino-acid polypeptide reads, in one-letter code: 5-keto-4-deoxy-D-glucarate aldolase (257 aa).

Histidine 51 (proton acceptor) is an active-site residue. Residue glutamine 152 participates in substrate binding. Position 154 (glutamate 154) interacts with Mg(2+). Substrate is bound by residues serine 179 and aspartate 180. Aspartate 180 lines the Mg(2+) pocket.

Belongs to the HpcH/HpaI aldolase family. KDGluc aldolase subfamily. Homohexamer; trimer of dimers. Mg(2+) serves as cofactor.

The enzyme catalyses 5-dehydro-4-deoxy-D-glucarate = 2-hydroxy-3-oxopropanoate + pyruvate. It catalyses the reaction 2-dehydro-3-deoxy-D-glucarate = 2-hydroxy-3-oxopropanoate + pyruvate. Its pathway is carbohydrate acid metabolism; galactarate degradation; D-glycerate from galactarate: step 2/3. In terms of biological role, catalyzes the reversible retro-aldol cleavage of both 5-keto-4-deoxy-D-glucarate and 2-keto-3-deoxy-D-glucarate to pyruvate and tartronic semialdehyde. In Shigella boydii serotype 18 (strain CDC 3083-94 / BS512), this protein is 5-keto-4-deoxy-D-glucarate aldolase.